The sequence spans 151 residues: UPF0756 membrane protein GWCH70_2680 (151 aa).

4 consecutive transmembrane segments (helical) span residues 5-25 (ILFL…SLMI), 53-73 (WGVT…EIGF), 86-106 (WIAL…VTLL), and 116-136 (LVFG…GPLI).

Belongs to the UPF0756 family.

The protein localises to the cell membrane. The polypeptide is UPF0756 membrane protein GWCH70_2680 (Geobacillus sp. (strain WCH70)).